Reading from the N-terminus, the 199-residue chain is Dephospho-CoA kinase (199 aa).

A DPCK domain is found at 3-199 (VLGLTGSIGM…AAARMPRRRP (197 aa)). 11-16 (GMGKST) contacts ATP.

The protein belongs to the CoaE family.

It localises to the cytoplasm. The enzyme catalyses 3'-dephospho-CoA + ATP = ADP + CoA + H(+). It functions in the pathway cofactor biosynthesis; coenzyme A biosynthesis; CoA from (R)-pantothenate: step 5/5. Catalyzes the phosphorylation of the 3'-hydroxyl group of dephosphocoenzyme A to form coenzyme A. This chain is Dephospho-CoA kinase, found in Rhodopseudomonas palustris (strain HaA2).